The following is a 156-amino-acid chain: EPIDERMAL PATTERNING FACTOR-like protein 6 (156 aa).

An N-terminal signal peptide occupies residues 1-47 (MGFERTSSSLSLLSSSLPSSLQPSENTRAKFSLFYLLLLFFVLCVIA). 3 disulfides stabilise this stretch: Cys113-Cys147, Cys117-Cys123, and Cys120-Cys149.

It belongs to the plant cysteine rich small secretory peptide family. Epidermal patterning factor subfamily. As to quaternary structure, interacts with ERECTA. Expressed in the internal layers of the root, hypocotyl and stems, and in the midrib of developing rosette leaves. Detected in a ring of cells surrounding the vascular elements. Expressed in developing stems soon after bolting, in inflorescence stems, near the root apex and in the chalazal region of ovules. Not found in cotyledons or in stomatal precursors or stomata.

It localises to the secreted. Its function is as follows. Acts primarily as positive regulator of inflorescence growth. Endodermal expression is sufficient for proper inflorescence architecture. Redundantly involved with EPFL4 in procambial development regulation. Also acts as tissue-specific regulator of epidermal pattern. Controls stomatal patterning by repressing stomatal production. TMM (AC Q9SSD1) functions to dampen or block CHAL signaling. Not processed by SDD1 (AC O64495). Acts as growth-regulatory ligand for ERECTA family receptors. The sequence is that of EPIDERMAL PATTERNING FACTOR-like protein 6 from Arabidopsis thaliana (Mouse-ear cress).